A 448-amino-acid polypeptide reads, in one-letter code: Beta-glucosidase A (448 aa).

E166 serves as the catalytic Proton donor. Residue E352 is the Nucleophile of the active site.

This sequence belongs to the glycosyl hydrolase 1 family. In terms of assembly, homooctamer.

The catalysed reaction is Hydrolysis of terminal, non-reducing beta-D-glucosyl residues with release of beta-D-glucose.. Functionally, bglA is intracellular and cleaves cellobiose probably through inorganic phosphate mediated hydrolysis. The polypeptide is Beta-glucosidase A (bglA) (Paenibacillus polymyxa (Bacillus polymyxa)).